Here is a 347-residue protein sequence, read N- to C-terminus: Phenylalanine--tRNA ligase alpha subunit (347 aa).

Glu265 contributes to the Mg(2+) binding site.

Belongs to the class-II aminoacyl-tRNA synthetase family. Phe-tRNA synthetase alpha subunit type 1 subfamily. In terms of assembly, tetramer of two alpha and two beta subunits. Requires Mg(2+) as cofactor.

It localises to the cytoplasm. The catalysed reaction is tRNA(Phe) + L-phenylalanine + ATP = L-phenylalanyl-tRNA(Phe) + AMP + diphosphate + H(+). In Mycolicibacterium paratuberculosis (strain ATCC BAA-968 / K-10) (Mycobacterium paratuberculosis), this protein is Phenylalanine--tRNA ligase alpha subunit.